The primary structure comprises 247 residues: Probable transcriptional regulatory protein Hhal_2210 (247 aa).

The protein belongs to the TACO1 family.

The protein resides in the cytoplasm. This chain is Probable transcriptional regulatory protein Hhal_2210, found in Halorhodospira halophila (strain DSM 244 / SL1) (Ectothiorhodospira halophila (strain DSM 244 / SL1)).